A 507-amino-acid polypeptide reads, in one-letter code: MVTIRADEISNIIRERIEQYNREVKIVNTGTVLQVGDGIARIHGLDEVMAGELVEFEEGTIGIAPNSESNNVGVVLMGDGLMIQEGSSVKATGRIAQIPVSEAYLGRVINALAKPIDGRGEISASESRLIESPAPGIISRRSVYEPLQTGLIAIDSMIPIGRGQRELIIGDRQTGKTAVATDTILNQKGQNVICVYVAIGQKASSVAQVVTTFQERGAMEYTIVVAETADSPATLQYLAPYTGAALAEYFMYRERHTLIIYDDPSKQAQAYRQMSLLLRRPPGREAYPGDVFYLHSRLLERAAKSSSRLGEGSMTALPIVETQSGDVSAYIPTNVISITDGQIFLSADLFNAGIRPAINVGISVSRVGSAAQIKAMKQVAGKSKLELAQFAELEAFAQFASDLDKATQNQLARGQRLRELLKQSQSAPFTVEEQIVTIYTGANGYLDLLEIGQVKKFLVQLRTHLRTNKPQFQEIICSTRTFTEQAEALLKEAIQEQIELFLLQEQA.

170 to 177 (GDRQTGKT) contacts ATP.

This sequence belongs to the ATPase alpha/beta chains family. As to quaternary structure, F-type ATPases have 2 components, CF(1) - the catalytic core - and CF(0) - the membrane proton channel. CF(1) has five subunits: alpha(3), beta(3), gamma(1), delta(1), epsilon(1). CF(0) has four main subunits: a, b, b' and c.

Its subcellular location is the plastid. The protein resides in the chloroplast thylakoid membrane. The enzyme catalyses ATP + H2O + 4 H(+)(in) = ADP + phosphate + 5 H(+)(out). Its function is as follows. Produces ATP from ADP in the presence of a proton gradient across the membrane. The alpha chain is a regulatory subunit. The sequence is that of ATP synthase subunit alpha, chloroplastic from Illicium oligandrum (Star anise).